A 211-amino-acid polypeptide reads, in one-letter code: Small ribosomal subunit protein uS3 (211 aa).

One can recognise a KH type-2 domain in the interval 38–106; sequence LRNFLKKRLY…EVYLNIQEVR (69 aa).

This sequence belongs to the universal ribosomal protein uS3 family. In terms of assembly, part of the 30S ribosomal subunit. Forms a tight complex with proteins S10 and S14.

Binds the lower part of the 30S subunit head. Binds mRNA in the 70S ribosome, positioning it for translation. This Citrifermentans bemidjiense (strain ATCC BAA-1014 / DSM 16622 / JCM 12645 / Bem) (Geobacter bemidjiensis) protein is Small ribosomal subunit protein uS3.